Here is a 798-residue protein sequence, read N- to C-terminus: Gelsolin (798 aa).

A signal peptide spans 1 to 28 (MDASGAATMAVLSSLLVFLALSSSLCSA). An actin-severing region spans residues 57 to 181 (RVMHPSFANA…YEQGGVGTGF (125 aa)). The stretch at 78–131 (ENFEPVIYPKTNYGKFYTGDSFIVLNTIENKKDKKLSWDVHFWLGLETSTDEAG) is one Gelsolin-like 1 repeat. Tyr90 bears the Phosphotyrosine; by SRC mark. The actin-actin interfilament contact point stretch occupies residues 128–131 (DEAG). Residues 167-174 (KNGIRYEQ) and 193-201 (RLFQVKGKR) contribute to the a 1,2-diacyl-sn-glycero-3-phospho-(1D-myo-inositol-4,5-bisphosphate) site. 4 Gelsolin-like repeats span residues 203-243 (VRVR…VEKL), 322-365 (LKVD…KEKT), 474-524 (IVVS…AARK), and 583-625 (VHAS…FEKQ). The interval 451–792 (MPDHGQNVIE…SYEDMKQLVI (342 aa)) is actin-binding, Ca-sensitive. Asp599 contributes to the Ca(2+) binding site. Tyr612 carries the phosphotyrosine; by SRC modification. Position 623 (Glu623) interacts with Ca(2+). Residue Tyr662 is modified to Phosphotyrosine; by SRC. A Gelsolin-like 6 repeat occupies 689 to 730 (LKVEEVAQYEQEDLDSDDIMLLDAGDEIYLWVGYGVSEEENG). Positions 705, 706, and 728 each coordinate Ca(2+).

This sequence belongs to the villin/gelsolin family. As to quaternary structure, binds to actin and to fibronectin. As to expression, isoform 1 and isoform 2 are ubiquitously expressed in early embryo. Isoform 1 is expressed in the fat body, and is abundant in hemolymph. Isoform 2 is expressed in parts of the gut.

It localises to the cytoplasm. It is found in the cytoskeleton. The protein localises to the secreted. Calcium-regulated, actin-modulating protein that binds to the plus (or barbed) ends of actin monomers or filaments, preventing monomer exchange (end-blocking or capping). It can promote the assembly of monomers into filaments (nucleation) as well as sever filaments already formed. The protein is Gelsolin (Gel) of Drosophila melanogaster (Fruit fly).